The chain runs to 149 residues: MLSGPHPSPTFRPNPCPWPCLHSLWMEISPTQLCFLSPGPSPQSPSCCFQGMNSGSELGKLWRKLFKGIPRLSVSHFDFYCGTCVLLGRPQIPQGSSLGNDIDQYPVVFRNASDQGSWMQLEMLLRKLSDLVWTSDALSDKILEDGLVP.

This is an uncharacterized protein from Homo sapiens (Human).